Reading from the N-terminus, the 248-residue chain is Probable transcriptional regulatory protein PSPA7_4544 (248 aa).

Belongs to the TACO1 family.

It is found in the cytoplasm. The protein is Probable transcriptional regulatory protein PSPA7_4544 of Pseudomonas paraeruginosa (strain DSM 24068 / PA7) (Pseudomonas aeruginosa (strain PA7)).